The following is a 192-amino-acid chain: Crossover junction endodeoxyribonuclease RuvC (192 aa).

Catalysis depends on residues Asp8, Glu67, and Asp139. 3 residues coordinate Mg(2+): Asp8, Glu67, and Asp139.

It belongs to the RuvC family. In terms of assembly, homodimer which binds Holliday junction (HJ) DNA. The HJ becomes 2-fold symmetrical on binding to RuvC with unstacked arms; it has a different conformation from HJ DNA in complex with RuvA. In the full resolvosome a probable DNA-RuvA(4)-RuvB(12)-RuvC(2) complex forms which resolves the HJ. The cofactor is Mg(2+).

It localises to the cytoplasm. The catalysed reaction is Endonucleolytic cleavage at a junction such as a reciprocal single-stranded crossover between two homologous DNA duplexes (Holliday junction).. The RuvA-RuvB-RuvC complex processes Holliday junction (HJ) DNA during genetic recombination and DNA repair. Endonuclease that resolves HJ intermediates. Cleaves cruciform DNA by making single-stranded nicks across the HJ at symmetrical positions within the homologous arms, yielding a 5'-phosphate and a 3'-hydroxyl group; requires a central core of homology in the junction. The consensus cleavage sequence is 5'-(A/T)TT(C/G)-3'. Cleavage occurs on the 3'-side of the TT dinucleotide at the point of strand exchange. HJ branch migration catalyzed by RuvA-RuvB allows RuvC to scan DNA until it finds its consensus sequence, where it cleaves and resolves the cruciform DNA. The sequence is that of Crossover junction endodeoxyribonuclease RuvC from Haemophilus ducreyi (strain 35000HP / ATCC 700724).